The chain runs to 456 residues: Glycine--tRNA ligase (456 aa).

Arg-98 and Glu-168 together coordinate substrate. ATP contacts are provided by residues 200–202 (RNE), 210–215 (FRTREF), 285–286 (EL), and 329–332 (GVER). A substrate-binding site is contributed by 215-219 (FEQME). 325–329 (EPSVG) serves as a coordination point for substrate.

It belongs to the class-II aminoacyl-tRNA synthetase family. As to quaternary structure, homodimer.

The protein resides in the cytoplasm. The catalysed reaction is tRNA(Gly) + glycine + ATP = glycyl-tRNA(Gly) + AMP + diphosphate. Catalyzes the attachment of glycine to tRNA(Gly). The polypeptide is Glycine--tRNA ligase (Mycoplasma capricolum subsp. capricolum (strain California kid / ATCC 27343 / NCTC 10154)).